Consider the following 452-residue polypeptide: Ketoisovalerate reductase BEA2 (452 aa).

70 to 75 contacts NADP(+); that stretch reads GPGNIG. Catalysis depends on Lys-285, which acts as the Proton donor. Substrate contacts are provided by Asn-289, Asn-293, and Ser-393. Glu-405 is a binding site for NADP(+).

Belongs to the ketopantoate reductase family.

The enzyme catalyses (R)-2-hydroxy-3-methylbutanoate + NADP(+) = 3-methyl-2-oxobutanoate + NADPH + H(+). Ketoisovalerate reductase; part of the gene cluster that mediates the biosynthesis of beauvericin (BEA), a non-ribosomal cyclic hexadepsipeptide that shows antibiotic, antifungal, insecticidal, and cancer cell antiproliferative and antihaptotactic activity. Ketoisovalerate reductase BEA2 catalyzes the NADPH-specific reduction of ketoisovaleric acid to hydroxyisovalerate, a precursor for beauvericin biosynthesis. The nonribosomal cyclodepsipeptide synthetase BEA1 then catalyzes the formation of beauvericin via condensation and cyclization of 3 dipeptidol monomers, each composed of one unit of hydroxyisovalerate and one unit of N-methyl-phenylalanine. The chain is Ketoisovalerate reductase BEA2 from Gibberella fujikuroi (strain CBS 195.34 / IMI 58289 / NRRL A-6831) (Bakanae and foot rot disease fungus).